Consider the following 427-residue polypeptide: Serine hydroxymethyltransferase (427 aa).

(6S)-5,6,7,8-tetrahydrofolate-binding positions include Leu118 and 122–124; that span reads GHL. Lys227 bears the N6-(pyridoxal phosphate)lysine mark. Residues Glu243 and 351-353 each bind (6S)-5,6,7,8-tetrahydrofolate; that span reads SPF.

The protein belongs to the SHMT family. Homodimer. Pyridoxal 5'-phosphate is required as a cofactor.

It localises to the cytoplasm. It catalyses the reaction (6R)-5,10-methylene-5,6,7,8-tetrahydrofolate + glycine + H2O = (6S)-5,6,7,8-tetrahydrofolate + L-serine. The protein operates within one-carbon metabolism; tetrahydrofolate interconversion. It participates in amino-acid biosynthesis; glycine biosynthesis; glycine from L-serine: step 1/1. Its function is as follows. Catalyzes the reversible interconversion of serine and glycine with tetrahydrofolate (THF) serving as the one-carbon carrier. This reaction serves as the major source of one-carbon groups required for the biosynthesis of purines, thymidylate, methionine, and other important biomolecules. Also exhibits THF-independent aldolase activity toward beta-hydroxyamino acids, producing glycine and aldehydes, via a retro-aldol mechanism. This is Serine hydroxymethyltransferase from Thermotoga neapolitana (strain ATCC 49049 / DSM 4359 / NBRC 107923 / NS-E).